We begin with the raw amino-acid sequence, 131 residues long: Small ribosomal subunit protein bS6 (131 aa).

The disordered stretch occupies residues 97 to 131 (TEASPMAKARDERDSRRGPAGERSYDEAHAEEIAE). The span at 104–131 (KARDERDSRRGPAGERSYDEAHAEEIAE) shows a compositional bias: basic and acidic residues.

The protein belongs to the bacterial ribosomal protein bS6 family.

Binds together with bS18 to 16S ribosomal RNA. The chain is Small ribosomal subunit protein bS6 from Shewanella baltica (strain OS223).